The chain runs to 400 residues: MTQRLFTSESVTEGHPDKICDAISDSILDAMLAVDPDSHVAVETVVTTGQVHVVGEVRCRGYVEIPSLVRQTLRNIGFLSSDMGFDGATCGVSVSIGEQSLEIGAGVDTALEARDGAEVEDDDRAGAGDQGLMFGYATNETPEYMPLPIALAHRLARRLTAVRKDDIVPHLRPDGKTQVTLAYNDDNNPIRIDTIVISTQHDPGVSRQWLEEQLRTNVITPVIKDAGVENLVDDELTVLINPSGSFVVGGPMGDAGLTGRKIIVDTYGGMARHGGGAFSGKDPSKVDRSAAYAMRWVAKNIVAAGLADRCEVQVAYAIGRANPVGLYVETFGTEKEPISAIQEAVQKVFDLRPAAIIRELDLKRPIYAQTAAYGHFGRTDLDLPWERLDRVDDLKAAISR.

An ATP-binding site is contributed by H15. D17 contributes to the Mg(2+) binding site. E43 provides a ligand contact to K(+). L-methionine contacts are provided by E56 and Q99. The flexible loop stretch occupies residues 99 to 109 (QSLEIGAGVDT). ATP-binding positions include 174 to 176 (DGK), D254, 260 to 261 (RK), A277, and K281. D254 is an L-methionine binding site. L-methionine is bound at residue K285.

It belongs to the AdoMet synthase family. Homotetramer; dimer of dimers. It depends on Mg(2+) as a cofactor. Requires K(+) as cofactor.

The protein localises to the cytoplasm. It carries out the reaction L-methionine + ATP + H2O = S-adenosyl-L-methionine + phosphate + diphosphate. The protein operates within amino-acid biosynthesis; S-adenosyl-L-methionine biosynthesis; S-adenosyl-L-methionine from L-methionine: step 1/1. Functionally, catalyzes the formation of S-adenosylmethionine (AdoMet) from methionine and ATP. The overall synthetic reaction is composed of two sequential steps, AdoMet formation and the subsequent tripolyphosphate hydrolysis which occurs prior to release of AdoMet from the enzyme. This chain is S-adenosylmethionine synthase, found in Corynebacterium kroppenstedtii (strain DSM 44385 / JCM 11950 / CIP 105744 / CCUG 35717).